A 403-amino-acid polypeptide reads, in one-letter code: tRNA pseudouridine synthase D (403 aa).

The segment covering 1 to 10 (MTVQVQDHDI) has biased composition (basic and acidic residues). Residues 1–24 (MTVQVQDHDITTAADTAKLPQPMQ) form a disordered region. Asp-92 acts as the Nucleophile in catalysis. Residues 192 to 354 (GVPNYFGPQR…IKAQRRALRL (163 aa)) form the TRUD domain. Positions 217-240 (ARPVPESRPQPNKGKRKRVPREQN) are disordered.

It belongs to the pseudouridine synthase TruD family.

It catalyses the reaction uridine(13) in tRNA = pseudouridine(13) in tRNA. Its function is as follows. Responsible for synthesis of pseudouridine from uracil-13 in transfer RNAs. The protein is tRNA pseudouridine synthase D of Psychrobacter arcticus (strain DSM 17307 / VKM B-2377 / 273-4).